The chain runs to 149 residues: Large ribosomal subunit protein bL9 (149 aa).

Belongs to the bacterial ribosomal protein bL9 family.

Functionally, binds to the 23S rRNA. The chain is Large ribosomal subunit protein bL9 from Helicobacter acinonychis (strain Sheeba).